We begin with the raw amino-acid sequence, 175 residues long: Lipoprotein signal peptidase (175 aa).

4 helical membrane-spanning segments follow: residues 25-45, 56-76, 81-101, and 110-130; these read LWMAFALLVVVLDQFFKIVIV, VTGFFNLVLVYNKGAAFSFLA, WQRWFFTGLGIVVGAFIVWLL, and FCFAVSLILGGAVGNVIDRVV. Active-site residues include Asp-136 and Asp-154. A helical membrane pass occupies residues 146–166; the sequence is HWPAFNVADCAITVGAVLLIV.

It belongs to the peptidase A8 family.

The protein resides in the cell inner membrane. The enzyme catalyses Release of signal peptides from bacterial membrane prolipoproteins. Hydrolyzes -Xaa-Yaa-Zaa-|-(S,diacylglyceryl)Cys-, in which Xaa is hydrophobic (preferably Leu), and Yaa (Ala or Ser) and Zaa (Gly or Ala) have small, neutral side chains.. It participates in protein modification; lipoprotein biosynthesis (signal peptide cleavage). This protein specifically catalyzes the removal of signal peptides from prolipoproteins. The polypeptide is Lipoprotein signal peptidase (Cupriavidus necator (strain ATCC 17699 / DSM 428 / KCTC 22496 / NCIMB 10442 / H16 / Stanier 337) (Ralstonia eutropha)).